The chain runs to 148 residues: uncharacterized protein (148 aa).

The first 22 residues, 1 to 22 (MVQTVLNSVWLWRSVLLRLTFS), serve as a signal peptide directing secretion.

This is an uncharacterized protein from Saccharomyces cerevisiae (strain ATCC 204508 / S288c) (Baker's yeast).